The chain runs to 161 residues: Regulator of ribonuclease activity A (161 aa).

It belongs to the RraA family. In terms of assembly, homotrimer. Binds to both RNA-binding sites in the C-terminal region of Rne and to RhlB.

It is found in the cytoplasm. In terms of biological role, globally modulates RNA abundance by binding to RNase E (Rne) and regulating its endonucleolytic activity. Can modulate Rne action in a substrate-dependent manner by altering the composition of the degradosome. Modulates RNA-binding and helicase activities of the degradosome. The sequence is that of Regulator of ribonuclease activity A from Yersinia enterocolitica serotype O:8 / biotype 1B (strain NCTC 13174 / 8081).